Consider the following 391-residue polypeptide: Chaperone protein DnaJ (391 aa).

In terms of domain architecture, J spans 6 to 71 (CYYEVLKVER…NKRARYDQYG (66 aa)). Residues 137–215 (GCHKDIVFRR…CRGTGTQNEK (79 aa)) form a CR-type zinc finger. Residues C150, C153, C167, C170, C189, C192, C203, and C206 each contribute to the Zn(2+) site. 4 CXXCXGXG motif repeats span residues 150 to 157 (CDTCDGSG), 167 to 174 (CTMCGGQG), 189 to 196 (CPTCKGAG), and 203 to 210 (CGKCRGTG). A disordered region spans residues 372-391 (FFDPEPEEAGTGSTDTEKDS).

It belongs to the DnaJ family. As to quaternary structure, homodimer. It depends on Zn(2+) as a cofactor.

It localises to the cytoplasm. Participates actively in the response to hyperosmotic and heat shock by preventing the aggregation of stress-denatured proteins and by disaggregating proteins, also in an autonomous, DnaK-independent fashion. Unfolded proteins bind initially to DnaJ; upon interaction with the DnaJ-bound protein, DnaK hydrolyzes its bound ATP, resulting in the formation of a stable complex. GrpE releases ADP from DnaK; ATP binding to DnaK triggers the release of the substrate protein, thus completing the reaction cycle. Several rounds of ATP-dependent interactions between DnaJ, DnaK and GrpE are required for fully efficient folding. Also involved, together with DnaK and GrpE, in the DNA replication of plasmids through activation of initiation proteins. The sequence is that of Chaperone protein DnaJ from Rhodopirellula baltica (strain DSM 10527 / NCIMB 13988 / SH1).